We begin with the raw amino-acid sequence, 442 residues long: uncharacterized protein (442 aa).

[4Fe-4S] cluster-binding residues include Cys-43, Cys-49, Cys-52, and Cys-130. S-adenosyl-L-methionine is bound by residues Gln-273, Tyr-302, Glu-323, and Asp-372. Catalysis depends on Cys-399, which acts as the Nucleophile.

This sequence belongs to the class I-like SAM-binding methyltransferase superfamily. RNA M5U methyltransferase family.

This is an uncharacterized protein from Protochlamydia amoebophila (strain UWE25).